Consider the following 325-residue polypeptide: Syntaxin-16 (325 aa).

The Cytoplasmic portion of the chain corresponds to 1–301 (MATRRLTDAF…AEQYQKKNRK (301 aa)). The residue at position 41 (Ser-41) is a Phosphoserine. The 63-residue stretch at 230-292 (TLMVEERERE…EDGLKQLHKA (63 aa)) folds into the t-SNARE coiled-coil homology domain. The helical; Anchor for type IV membrane protein transmembrane segment at 302-322 (MLVILILFVIIIVLIVVLVGV) threads the bilayer. Residues 323 to 325 (KSR) are Vesicular-facing.

It belongs to the syntaxin family. As to quaternary structure, interacts with GCC2. Interacts with BAIAP3; this interaction is increased in the presence of calcium. In terms of tissue distribution, ubiquitous.

It is found in the golgi apparatus membrane. Its subcellular location is the cytoplasm. Its function is as follows. SNARE involved in vesicular transport from the late endosomes to the trans-Golgi network. In Homo sapiens (Human), this protein is Syntaxin-16 (STX16).